Reading from the N-terminus, the 78-residue chain is MAQQRRGGRRRRKVDFIAANHIEYIDYKDTNLLDRFISERGKILPRRVTGTSAKNQRKLTIAIKRARIMGLLPFVSED.

This sequence belongs to the bacterial ribosomal protein bS18 family. In terms of assembly, part of the 30S ribosomal subunit. Forms a tight heterodimer with protein bS6.

Binds as a heterodimer with protein bS6 to the central domain of the 16S rRNA, where it helps stabilize the platform of the 30S subunit. The protein is Small ribosomal subunit protein bS18 of Lacticaseibacillus casei (strain BL23) (Lactobacillus casei).